Reading from the N-terminus, the 82-residue chain is Omega-conotoxin-like Am6.2 (82 aa).

Positions 1 to 22 (MKLTCMMIVAVLFLTAWTFVTA) are cleaved as a signal peptide. Residues 23–52 (VPHSSNVLENLYLKARHEMENQEASKLNMR) constitute a propeptide that is removed on maturation. 3 disulfides stabilise this stretch: Cys-56–Cys-73, Cys-63–Cys-77, and Cys-72–Cys-81. A 6'-bromotryptophan; partial; in Am6.2b (major form) modification is found at Trp-76.

This sequence belongs to the conotoxin O1 family. In terms of processing, mostly non-hydroxylated. Post-translationally, two forms of this peptides have been described. Am6.2a (Am3136) is not unmodified, while Am6.2b (Am3214) is Trp-76 brominated. Both forms are found in venom with a much more abundant brominated form. In terms of tissue distribution, expressed by the venom duct.

The protein resides in the secreted. In terms of biological role, omega-conotoxins act at presynaptic membranes, they bind and block voltage-gated calcium channels (Cav). This Conus amadis (Amadis cone) protein is Omega-conotoxin-like Am6.2.